We begin with the raw amino-acid sequence, 241 residues long: Ribonuclease PH (241 aa).

Residues Arg89 and 127 to 129 (GTR) contribute to the phosphate site.

The protein belongs to the RNase PH family. As to quaternary structure, homohexameric ring arranged as a trimer of dimers.

The enzyme catalyses tRNA(n+1) + phosphate = tRNA(n) + a ribonucleoside 5'-diphosphate. In terms of biological role, phosphorolytic 3'-5' exoribonuclease that plays an important role in tRNA 3'-end maturation. Removes nucleotide residues following the 3'-CCA terminus of tRNAs; can also add nucleotides to the ends of RNA molecules by using nucleoside diphosphates as substrates, but this may not be physiologically important. Probably plays a role in initiation of 16S rRNA degradation (leading to ribosome degradation) during starvation. The polypeptide is Ribonuclease PH (Xanthomonas campestris pv. campestris (strain 8004)).